The following is a 376-amino-acid chain: MSAESCFGSSGDQSSSKGVATHGGSYVQYNVYGNLFEVSRKYVPPLRPIGRGAYGIVCAATNSETGEEVAIKKIGNAFDNIIDAKRTLREIKLLKHMDHENVIAVKDIIKPPQRENFNDVYIVYELMDTDLHQIIRSNQPLTDDHCRFFLYQLLRGLKYVHSANVLHRDLKPSNLLLNANCDLKLGDFGLARTKSETDFMTEYVVTRWYRAPELLLNCSEYTAAIDIWSVGCILGETMTREPLFPGKDYVHQLRLITELIGSPDDSSLGFLRSDNARRYVRQLPQYPRQNFAARFPNMSAGAVDLLEKMLVFDPSRRITVDEALCHPYLAPLHDINEEPVCVRPFNFDFEQPTLTEENIKELIYRETVKFNPQDSV.

The region spanning 43 to 329 is the Protein kinase domain; that stretch reads VPPLRPIGRG…VDEALCHPYL (287 aa). ATP contacts are provided by residues 49-57 and Lys72; that span reads IGRGAYGIV. Asp169 serves as the catalytic Proton acceptor. Thr201 carries the phosphothreonine modification. The TXY signature appears at 201 to 203; that stretch reads TEY. The residue at position 203 (Tyr203) is a Phosphotyrosine.

It belongs to the protein kinase superfamily. CMGC Ser/Thr protein kinase family. MAP kinase subfamily. In terms of assembly, interacts with MEKK1, MKK1, MKK2 and MKK6. May form a ternary complex composed of MEKK1 and MKK1/MKK2 and MPK4. Interacts with MKS1 and AP2C1. May form a ternary or larger complex with MKS1 and WRKY25 and/or WRKY33. Interacts with MAP65-1. No interactions with RACK1A, RACK1B or RACK1C. Interacts directly with ASR3 and mediates its phosphorylation. Binds to MEKK2. Interacts with PAT1. Binds to HT1. Post-translationally, dually phosphorylated on Thr-201 and Tyr-203, which activates the enzyme. Autophosphorylated on serine and tyrosine residues. Dephosphorylated by DSPTP1. Phosphorylated by MKK6 in vitro. As to expression, ubiquitous. Expressed in the veins and stomatal guard cells of leaf plates, petioles, stem, roots and flowers.

Its subcellular location is the cytoplasm. It is found in the nucleus. It localises to the cytoskeleton. It catalyses the reaction L-seryl-[protein] + ATP = O-phospho-L-seryl-[protein] + ADP + H(+). The catalysed reaction is L-threonyl-[protein] + ATP = O-phospho-L-threonyl-[protein] + ADP + H(+). Its activity is regulated as follows. Activated by threonine and tyrosine phosphorylation. Activated by the MAP kinase kinases MKK1 and MKK2. Activated in response to touch, wounding, low temperature, low humidity, salt stress and the bacterial elicitors flagellin and harpin. Activated upon Pseudomonas syringae pv. tomato DC3000 infection. Repressed by the protein phosphatase 2C AP2C1. Repressed by DSPTP1-mediated dephosphorylation. Activated by the MAP kinase kinase MKK6 in vitro. Functionally, the ANPs-MKK6-MPK4 module is involved in the regulation of plant cytokinesis during meiosis and mitosis. Essential to promote the progression of cytokinesis and for cellularization (formation of the cell plate) during male-specific meiosis. Involved in cortical microtubules organization and stabilization by regulating the phosphorylation state of microtubule-associated proteins such as MAP65-1. Involved in root hair development process. Negative regulator of systemic acquired resistance (SAR) and salicylic acid- (SA) mediated defense response. Required for jasmonic acid- (JA) mediated defense gene expression. May regulate activity of transcription factor controlling pathogenesis-related (PR) gene expression. Seems to act independently of the SAR regulatory protein NPR1 (Nonexpresser of PR1). Phosphorylates MKS1 and transcription factors WRKY25 and WRKY33. The MEKK1, MKK1/MKK2 and MPK4 function in a signaling pathway that modulates the expression of genes responding to biotic and abiotic stresses and also plays an important role in pathogen defense by negatively regulating innate immunity. Phosphorylates MEKK2 upon treatment with flg22. Involved in stomatal movement regulation by repressing HT1 and HT1-mediated GHR1 phosphorylation. This is Mitogen-activated protein kinase 4 from Arabidopsis thaliana (Mouse-ear cress).